Reading from the N-terminus, the 252-residue chain is Protein BTG3 (252 aa).

Residues 138 to 163 (VTSDYHSGSSSSDEDTSKEVDVKPSS) are disordered.

It belongs to the BTG family. As to expression, ubiquitous.

In terms of biological role, overexpression impairs serum-induced cell cycle progression from the G0/G1 to S phase. The protein is Protein BTG3 (Btg3) of Mus musculus (Mouse).